Here is a 411-residue protein sequence, read N- to C-terminus: Dual-specificity RNA methyltransferase RlmN (411 aa).

The active-site Proton acceptor is the Glu-124. Residues 130 to 379 (EEGRGTLCIS…IRTPRGRDIL (250 aa)) form the Radical SAM core domain. A disulfide bridge links Cys-137 with Cys-382. [4Fe-4S] cluster contacts are provided by Cys-144, Cys-148, and Cys-151. S-adenosyl-L-methionine is bound by residues 208 to 209 (GE), Ser-240, 262 to 264 (SLH), and Asn-339. Cys-382 acts as the S-methylcysteine intermediate in catalysis.

The protein belongs to the radical SAM superfamily. RlmN family. It depends on [4Fe-4S] cluster as a cofactor.

The protein localises to the cytoplasm. It carries out the reaction adenosine(2503) in 23S rRNA + 2 reduced [2Fe-2S]-[ferredoxin] + 2 S-adenosyl-L-methionine = 2-methyladenosine(2503) in 23S rRNA + 5'-deoxyadenosine + L-methionine + 2 oxidized [2Fe-2S]-[ferredoxin] + S-adenosyl-L-homocysteine. The catalysed reaction is adenosine(37) in tRNA + 2 reduced [2Fe-2S]-[ferredoxin] + 2 S-adenosyl-L-methionine = 2-methyladenosine(37) in tRNA + 5'-deoxyadenosine + L-methionine + 2 oxidized [2Fe-2S]-[ferredoxin] + S-adenosyl-L-homocysteine. Specifically methylates position 2 of adenine 2503 in 23S rRNA and position 2 of adenine 37 in tRNAs. m2A2503 modification seems to play a crucial role in the proofreading step occurring at the peptidyl transferase center and thus would serve to optimize ribosomal fidelity. The polypeptide is Dual-specificity RNA methyltransferase RlmN (Rhizobium meliloti (strain 1021) (Ensifer meliloti)).